A 360-amino-acid polypeptide reads, in one-letter code: Photosystem II protein D1 2 (360 aa).

3 helical membrane-spanning segments follow: residues 29 to 46 (YIGWFGVLMIPTLLAATT), 118 to 133 (HFLTGVFCYLGREWEL), and 142 to 156 (WICLAFSAPVAAATA). Residue histidine 118 participates in chlorophyll a binding. Tyrosine 126 is a binding site for pheophytin a. [CaMn4O5] cluster is bound by residues aspartate 170 and glutamate 189. A helical transmembrane segment spans residues 197–218 (FHMLGVAGVFGGSLFSAMHGSL). Position 198 (histidine 198) interacts with chlorophyll a. A quinone contacts are provided by residues histidine 215 and 264-265 (SF). Residue histidine 215 participates in Fe cation binding. Histidine 272 provides a ligand contact to Fe cation. Residues 274-288 (FLAAWPVIGIWFTAL) traverse the membrane as a helical segment. The [CaMn4O5] cluster site is built by histidine 332, glutamate 333, aspartate 342, and alanine 344. The propeptide occupies 345 to 360 (AGEVAPVAISAPAING).

It belongs to the reaction center PufL/M/PsbA/D family. PSII is composed of 1 copy each of membrane proteins PsbA, PsbB, PsbC, PsbD, PsbE, PsbF, PsbH, PsbI, PsbJ, PsbK, PsbL, PsbM, PsbT, PsbX, PsbY, PsbZ, Psb30/Ycf12, peripheral proteins PsbO, CyanoQ (PsbQ), PsbU, PsbV and a large number of cofactors. It forms dimeric complexes. Requires The D1/D2 heterodimer binds P680, chlorophylls that are the primary electron donor of PSII, and subsequent electron acceptors. It shares a non-heme iron and each subunit binds pheophytin, quinone, additional chlorophylls, carotenoids and lipids. D1 provides most of the ligands for the Mn4-Ca-O5 cluster of the oxygen-evolving complex (OEC). There is also a Cl(-1) ion associated with D1 and D2, which is required for oxygen evolution. The PSII complex binds additional chlorophylls, carotenoids and specific lipids. as cofactor. In terms of processing, tyr-161 forms a radical intermediate that is referred to as redox-active TyrZ, YZ or Y-Z. C-terminally processed by CtpA; processing is essential to allow assembly of the oxygen-evolving complex and thus photosynthetic growth.

Its subcellular location is the cellular thylakoid membrane. It catalyses the reaction 2 a plastoquinone + 4 hnu + 2 H2O = 2 a plastoquinol + O2. Functionally, photosystem II (PSII) is a light-driven water:plastoquinone oxidoreductase that uses light energy to abstract electrons from H(2)O, generating O(2) and a proton gradient subsequently used for ATP formation. It consists of a core antenna complex that captures photons, and an electron transfer chain that converts photonic excitation into a charge separation. The D1/D2 (PsbA/PsbD) reaction center heterodimer binds P680, the primary electron donor of PSII as well as several subsequent electron acceptors. The chain is Photosystem II protein D1 2 from Nostoc sp. (strain PCC 7120 / SAG 25.82 / UTEX 2576).